The following is a 346-amino-acid chain: Histidinol-phosphate aminotransferase (346 aa).

An N6-(pyridoxal phosphate)lysine modification is found at Lys-209.

This sequence belongs to the class-II pyridoxal-phosphate-dependent aminotransferase family. Histidinol-phosphate aminotransferase subfamily. In terms of assembly, homodimer. Pyridoxal 5'-phosphate is required as a cofactor.

The enzyme catalyses L-histidinol phosphate + 2-oxoglutarate = 3-(imidazol-4-yl)-2-oxopropyl phosphate + L-glutamate. The protein operates within amino-acid biosynthesis; L-histidine biosynthesis; L-histidine from 5-phospho-alpha-D-ribose 1-diphosphate: step 7/9. This Vibrio cholerae serotype O1 (strain ATCC 39315 / El Tor Inaba N16961) protein is Histidinol-phosphate aminotransferase.